A 668-amino-acid polypeptide reads, in one-letter code: tRNA 5-methylaminomethyl-2-thiouridine biosynthesis bifunctional protein MnmC (668 aa).

The interval Met1–Glu245 is tRNA (mnm(5)s(2)U34)-methyltransferase. The FAD-dependent cmnm(5)s(2)U34 oxidoreductase stretch occupies residues Ile270–Gly668.

This sequence in the N-terminal section; belongs to the methyltransferase superfamily. tRNA (mnm(5)s(2)U34)-methyltransferase family. In the C-terminal section; belongs to the DAO family. FAD is required as a cofactor.

Its subcellular location is the cytoplasm. It carries out the reaction 5-aminomethyl-2-thiouridine(34) in tRNA + S-adenosyl-L-methionine = 5-methylaminomethyl-2-thiouridine(34) in tRNA + S-adenosyl-L-homocysteine + H(+). In terms of biological role, catalyzes the last two steps in the biosynthesis of 5-methylaminomethyl-2-thiouridine (mnm(5)s(2)U) at the wobble position (U34) in tRNA. Catalyzes the FAD-dependent demodification of cmnm(5)s(2)U34 to nm(5)s(2)U34, followed by the transfer of a methyl group from S-adenosyl-L-methionine to nm(5)s(2)U34, to form mnm(5)s(2)U34. The polypeptide is tRNA 5-methylaminomethyl-2-thiouridine biosynthesis bifunctional protein MnmC (Escherichia coli (strain UTI89 / UPEC)).